Here is a 196-residue protein sequence, read N- to C-terminus: UPF0301 protein BT_1078 (196 aa).

This sequence belongs to the UPF0301 (AlgH) family.

In Bacteroides thetaiotaomicron (strain ATCC 29148 / DSM 2079 / JCM 5827 / CCUG 10774 / NCTC 10582 / VPI-5482 / E50), this protein is UPF0301 protein BT_1078.